The sequence spans 632 residues: Gamma-aminobutyric acid receptor subunit theta (632 aa).

The first 21 residues, 1–21 (MGIRGMLRAAVILLLIRTWLA), serve as a signal peptide directing secretion. Over 22-268 (EGNYPSPIPK…FQVQREVNSY (247 aa)) the chain is Extracellular. A glycan (N-linked (GlcNAc...) asparagine) is linked at N127. Cysteines 183 and 197 form a disulfide. A helical membrane pass occupies residues 269–289 (LVQVYWPTVLTTITSWISFWM). Over 290–297 (NYDSSAAR) the chain is Cytoplasmic. Residues 298–315 (VTIGLTSMLILTTIDSHL) traverse the membrane as a helical segment. At 316–326 (RDKLPNISCIK) the chain is on the extracellular side. Residues 327-347 (AIDIYILVCLFFVFLSLLEYV) traverse the membrane as a helical segment. Residues 348 to 611 (YINYLFYSRG…DYVPKVDKWS (264 aa)) are Cytoplasmic-facing. Disordered regions lie at residues 410–458 (SPES…STSE) and 491–523 (HGVTHDHEDSNESLSSDERHGHGPSGKPMLHHG). Residues 413-425 (SLGSLTSTSEQAQ) show a composition bias toward polar residues. Over residues 426-439 (LATSESLSPLTSLS) the composition is skewed to low complexity. Residues 448–458 (ESLSDLPSTSE) are compositionally biased toward polar residues. Over residues 491 to 511 (HGVTHDHEDSNESLSSDERHG) the composition is skewed to basic and acidic residues. A helical membrane pass occupies residues 612-632 (RFLFPLAFGLFNIVYWVYHMY).

This sequence belongs to the ligand-gated ion channel (TC 1.A.9) family. Gamma-aminobutyric acid receptor (TC 1.A.9.5) subfamily. GABRQ sub-subfamily. Heteropentamer, formed by a combination of alpha (GABRA1-6), beta (GABRB1-3), gamma (GABRG1-3), delta (GABRD), epsilon (GABRE), rho (GABRR1-3), pi (GABRP) and theta (GABRQ) chains, each subunit exhibiting distinct physiological and pharmacological properties. Expressed in brain.

The protein localises to the postsynaptic cell membrane. The protein resides in the cell membrane. It carries out the reaction chloride(in) = chloride(out). With respect to regulation, potentiated by etomidate, propofol, pregnanolone and pentobarbital. Its function is as follows. Theta subunit of the heteropentameric ligand-gated chloride channel gated by gamma-aminobutyric acid (GABA), a major inhibitory neurotransmitter in the brain. GABA-gated chloride channels, also named GABA(A) receptors (GABAAR), consist of five subunits arranged around a central pore and contain GABA active binding site(s) located at the alpha and beta subunit interfaces. When activated by GABA, GABAARs selectively allow the flow of chloride anions across the cell membrane down their electrochemical gradient. This chain is Gamma-aminobutyric acid receptor subunit theta, found in Homo sapiens (Human).